We begin with the raw amino-acid sequence, 325 residues long: MLIKELSEQVKKDLKDYFQERDYMVIAVPKKEPVRVYVVKATNTVETARRIHNLSPSATVAMGRAIVGALLLTSLLKHGTNQKLLLKIEGDGPIGTIVVEADAKGRVRGFVGNPNVDTYTKEVEGKKKFDVAKIVGKGTLTVVKDLGMGKPYTSVVPLISGEIGQDIAYYLYQSEQTPSAVAVGVKVNEDGSVKHAGGYLVQTLGGTSEKVKELLEKRILSLPPVTEMMEKGMRPEDIAVEILKDMEPQLIGLKEVEYYCPCDEEVAKASLFLMSTQELEDLFNENELAEVSCNFCGRIYRFDRSVIEEKRELEKKKGENGEKKD.

2 disulfide bridges follow: Cys260–Cys262 and Cys293–Cys296.

Belongs to the HSP33 family. Post-translationally, under oxidizing conditions two disulfide bonds are formed involving the reactive cysteines. Under reducing conditions zinc is bound to the reactive cysteines and the protein is inactive.

It is found in the cytoplasm. Its function is as follows. Redox regulated molecular chaperone. Protects both thermally unfolding and oxidatively damaged proteins from irreversible aggregation. Plays an important role in the bacterial defense system toward oxidative stress. The protein is 33 kDa chaperonin of Aquifex aeolicus (strain VF5).